The primary structure comprises 304 residues: C-type lectin domain-containing protein 141 (304 aa).

The signal sequence occupies residues 1-19; the sequence is MRSSSTLLIAFGLFLASMS. The segment at 29 to 100 is disordered; sequence GSGGHRPPSS…TTPEPTTTKV (72 aa). Positions 51 to 99 are enriched in low complexity; that stretch reads TKPPKSTSTPSTSTSTPTTTTTTTTTTTTTPTTTTTTTTTTTPEPTTTK.

This is C-type lectin domain-containing protein 141 (clec-141) from Caenorhabditis elegans.